Consider the following 74-residue polypeptide: MAVFEKVQEIIVEELGKDAEEVKVETTFDELDADSLDVFQVISEIEDEFDIQIETEEGLNTVGDLVAYVEEKTK.

Positions 1–73 (MAVFEKVQEI…DLVAYVEEKT (73 aa)) constitute a Carrier domain. Residue S35 is modified to O-(pantetheine 4'-phosphoryl)serine.

It belongs to the acyl carrier protein (ACP) family. In terms of processing, 4'-phosphopantetheine is transferred from CoA to a specific serine of apo-ACP by AcpS. This modification is essential for activity because fatty acids are bound in thioester linkage to the sulfhydryl of the prosthetic group.

The protein resides in the cytoplasm. It functions in the pathway lipid metabolism; fatty acid biosynthesis. Functionally, carrier of the growing fatty acid chain in fatty acid biosynthesis. The chain is Acyl carrier protein from Streptococcus thermophilus (strain CNRZ 1066).